The chain runs to 78 residues: Probable two-component-system connector protein YcgZ (78 aa).

Its function is as follows. Probably a connector protein for RcsB/C regulation of biofilm formation, providing additional signal input into the two-component signaling pathway. Partially antagonizes the activities of YmgA and AriR, proteins that, via the Rcs phosphorelay, promote the synthesis of colanic acid, an exopolysaccharide and matrix component. The protein is Probable two-component-system connector protein YcgZ (ycgZ) of Escherichia coli (strain K12).